Here is a 159-residue protein sequence, read N- to C-terminus: MVGKASYVRFPLLFRPILERLMFDFDATLPLMAVQFLILTVILNALLYKPLGQALDNRDEYIRTNLQQAKERLQQATELANQYEQELAYTRREAQAIIEEARAEAQKIATAEIAAAQQALQAELMKAQAEIDQQKQATLQALEGQVSSLSEQLLAKLLA.

A helical transmembrane segment spans residues 27-47 (ATLPLMAVQFLILTVILNALL).

This sequence belongs to the ATPase B chain family. F-type ATPases have 2 components, F(1) - the catalytic core - and F(0) - the membrane proton channel. F(1) has five subunits: alpha(3), beta(3), gamma(1), delta(1), epsilon(1). F(0) has four main subunits: a(1), b(1), b'(1) and c(10-14). The alpha and beta chains form an alternating ring which encloses part of the gamma chain. F(1) is attached to F(0) by a central stalk formed by the gamma and epsilon chains, while a peripheral stalk is formed by the delta, b and b' chains.

It localises to the cellular thylakoid membrane. Its function is as follows. F(1)F(0) ATP synthase produces ATP from ADP in the presence of a proton or sodium gradient. F-type ATPases consist of two structural domains, F(1) containing the extramembraneous catalytic core and F(0) containing the membrane proton channel, linked together by a central stalk and a peripheral stalk. During catalysis, ATP synthesis in the catalytic domain of F(1) is coupled via a rotary mechanism of the central stalk subunits to proton translocation. Component of the F(0) channel, it forms part of the peripheral stalk, linking F(1) to F(0). The b'-subunit is a diverged and duplicated form of b found in plants and photosynthetic bacteria. This Synechococcus sp. (strain PCC 6716) protein is ATP synthase subunit b'.